The chain runs to 76 residues: UPF0352 protein PC1_1633 (76 aa).

It belongs to the UPF0352 family.

The polypeptide is UPF0352 protein PC1_1633 (Pectobacterium carotovorum subsp. carotovorum (strain PC1)).